Reading from the N-terminus, the 1092-residue chain is Isoleucine--tRNA ligase (1092 aa).

Residues 53-63 (PFANGLPHYGH) carry the 'HIGH' region motif. The 'KMSKS' region motif lies at 613 to 617 (KLSKR). Residue Lys-616 participates in ATP binding.

Belongs to the class-I aminoacyl-tRNA synthetase family. IleS type 2 subfamily. Monomer. Requires Zn(2+) as cofactor.

Its subcellular location is the cytoplasm. The catalysed reaction is tRNA(Ile) + L-isoleucine + ATP = L-isoleucyl-tRNA(Ile) + AMP + diphosphate. Its function is as follows. Catalyzes the attachment of isoleucine to tRNA(Ile). As IleRS can inadvertently accommodate and process structurally similar amino acids such as valine, to avoid such errors it has two additional distinct tRNA(Ile)-dependent editing activities. One activity is designated as 'pretransfer' editing and involves the hydrolysis of activated Val-AMP. The other activity is designated 'posttransfer' editing and involves deacylation of mischarged Val-tRNA(Ile). The sequence is that of Isoleucine--tRNA ligase from Rickettsia peacockii (strain Rustic).